Consider the following 507-residue polypeptide: Histidine ammonia-lyase (507 aa).

The segment at residues 141 to 143 (ASG) is a cross-link (5-imidazolinone (Ala-Gly)). S142 carries the post-translational modification 2,3-didehydroalanine (Ser).

It belongs to the PAL/histidase family. Post-translationally, contains an active site 4-methylidene-imidazol-5-one (MIO), which is formed autocatalytically by cyclization and dehydration of residues Ala-Ser-Gly.

It localises to the cytoplasm. The enzyme catalyses L-histidine = trans-urocanate + NH4(+). Its pathway is amino-acid degradation; L-histidine degradation into L-glutamate; N-formimidoyl-L-glutamate from L-histidine: step 1/3. This chain is Histidine ammonia-lyase, found in Cereibacter sphaeroides (strain ATCC 17029 / ATH 2.4.9) (Rhodobacter sphaeroides).